A 248-amino-acid polypeptide reads, in one-letter code: Protein-lysine N-methyltransferase EFM5 (248 aa).

Belongs to the class I-like SAM-binding methyltransferase superfamily. EFM5 family.

It is found in the cytoplasm. Functionally, S-adenosyl-L-methionine-dependent protein-lysine N-methyltransferase that trimethylates elongation factor 1-alpha (TEF1 and TEF2) at 'Lys-79'. Required for replication of Brome mosaic virus (BMV). The sequence is that of Protein-lysine N-methyltransferase EFM5 from Saccharomyces cerevisiae (strain ATCC 204508 / S288c) (Baker's yeast).